A 201-amino-acid polypeptide reads, in one-letter code: Ribonuclease HII (201 aa).

Residues Asp12–Gln201 enclose the RNase H type-2 domain. The a divalent metal cation site is built by Asp18, Glu19, and Asp110.

The protein belongs to the RNase HII family. It depends on Mn(2+) as a cofactor. The cofactor is Mg(2+).

It localises to the cytoplasm. It catalyses the reaction Endonucleolytic cleavage to 5'-phosphomonoester.. Endonuclease that specifically degrades the RNA of RNA-DNA hybrids. The protein is Ribonuclease HII of Pseudomonas aeruginosa (strain ATCC 15692 / DSM 22644 / CIP 104116 / JCM 14847 / LMG 12228 / 1C / PRS 101 / PAO1).